A 375-amino-acid chain; its full sequence is tRNA-specific 2-thiouridylase MnmA (375 aa).

Residues G12–S19 and M38 contribute to the ATP site. The segment at N98 to D100 is interaction with target base in tRNA. The active-site Nucleophile is the C103. An intrachain disulfide couples C103 to C200. G127 is an ATP binding site. The segment at K150–Q152 is interaction with tRNA. Catalysis depends on C200, which acts as the Cysteine persulfide intermediate. Residues R312–Y313 are interaction with tRNA.

This sequence belongs to the MnmA/TRMU family.

It localises to the cytoplasm. It carries out the reaction S-sulfanyl-L-cysteinyl-[protein] + uridine(34) in tRNA + AH2 + ATP = 2-thiouridine(34) in tRNA + L-cysteinyl-[protein] + A + AMP + diphosphate + H(+). Catalyzes the 2-thiolation of uridine at the wobble position (U34) of tRNA, leading to the formation of s(2)U34. The protein is tRNA-specific 2-thiouridylase MnmA of Levilactobacillus brevis (strain ATCC 367 / BCRC 12310 / CIP 105137 / JCM 1170 / LMG 11437 / NCIMB 947 / NCTC 947) (Lactobacillus brevis).